Consider the following 137-residue polypeptide: Large ribosomal subunit protein uL16 (137 aa).

Belongs to the universal ribosomal protein uL16 family. In terms of assembly, part of the 50S ribosomal subunit.

Binds 23S rRNA and is also seen to make contacts with the A and possibly P site tRNAs. The chain is Large ribosomal subunit protein uL16 from Pseudomonas aeruginosa (strain LESB58).